The chain runs to 491 residues: MGFENEKNSSILSKLATNEELGENSPYFDGWKAYDNDPFHPLKNPNGVIQMGLAENQLCFDLIEEWIKRNPNASICTTEGIKSFRAIANFQDYHGLPEFRSAIAKFMEKTRGGRVTFDPERVVMAGGATGANETIIFCLADTGDAFLVPSPYYPAFNRDLRWRTGVQLIPIPCDSSNNFQITTKAVREAYENAQKSNIKVKGLILTNPSNPLGTTLDRDTLKNLLTFTNQHNIHLVCDEIYAATVFNTPQFVSIAEILDDETSHCNKDLVHIVYSLSKDMGLPGFRVGIVYSFNDAVVNCARKMSSFGLVSTQTQYLLAEMLSDERFVSNFLTESSKRLAKRHKHFTNGLEEVGIKCLRSNAGLFCWMDLRPLLKESTFDSEMSLWRVIINDVKLNVSPGSSFDCQEPGFFRVCFANMDDETVDIALARIRSFVGVKKSGDESTPILMEKKQQWKKNNLRLSFSKRMYDESVNLSPLSSPIPHSPLVRART.

An N6-(pyridoxal phosphate)lysine modification is found at Lys278.

Belongs to the class-I pyridoxal-phosphate-dependent aminotransferase family. In terms of assembly, homodimer. The cofactor is pyridoxal 5'-phosphate.

It catalyses the reaction S-adenosyl-L-methionine = 1-aminocyclopropane-1-carboxylate + S-methyl-5'-thioadenosine + H(+). Its pathway is alkene biosynthesis; ethylene biosynthesis via S-adenosyl-L-methionine; ethylene from S-adenosyl-L-methionine: step 1/2. Its function is as follows. Catalyzes the formation of 1-aminocyclopropane-1-carboxylate, a direct precursor of ethylene in higher plants. In Nicotiana tabacum (Common tobacco), this protein is 1-aminocyclopropane-1-carboxylate synthase (ACS1).